The primary structure comprises 298 residues: N-acetylmuramic acid 6-phosphate etherase (298 aa).

Residues 55-218 (IHAQVSGGGR…STGLMIKSGK (164 aa)) enclose the SIS domain. Glutamate 83 functions as the Proton donor in the catalytic mechanism. Glutamate 114 is a catalytic residue.

Belongs to the GCKR-like family. MurNAc-6-P etherase subfamily. Homodimer.

It carries out the reaction N-acetyl-D-muramate 6-phosphate + H2O = N-acetyl-D-glucosamine 6-phosphate + (R)-lactate. The protein operates within amino-sugar metabolism; 1,6-anhydro-N-acetylmuramate degradation. It functions in the pathway amino-sugar metabolism; N-acetylmuramate degradation. It participates in cell wall biogenesis; peptidoglycan recycling. In terms of biological role, specifically catalyzes the cleavage of the D-lactyl ether substituent of MurNAc 6-phosphate, producing GlcNAc 6-phosphate and D-lactate. Together with AnmK, is also required for the utilization of anhydro-N-acetylmuramic acid (anhMurNAc) either imported from the medium or derived from its own cell wall murein, and thus plays a role in cell wall recycling. In Shigella boydii serotype 18 (strain CDC 3083-94 / BS512), this protein is N-acetylmuramic acid 6-phosphate etherase.